The chain runs to 189 residues: 5-hmdU DNA kinase (189 aa).

It belongs to the thymidylate kinase family. 5-hmdU DNA kinase subfamily.

The catalysed reaction is 5-hydroxymethyl-dUMP in DNA + ATP = 5-phosphomethyl-dUMP in DNA + ADP + H(+). In terms of biological role, phosphorylates 5-hydroxymethyluracil (5hmdU) into 5-phosphomethyl-2'-deoxyuridine (5- PmdU) on DNA as a step in the pathway leading to thymidine hypermodifications in the viral genome. The phosphate is added internally to the DNA polymer. As a final result of the pathway of hypermodification, 5-AcNmdU substitutes for a subset of thymidines in the viral DNA. These modifications probably prevent degradation of viral genome by the host restriction-modification antiviral defense system. This chain is 5-hmdU DNA kinase, found in Pseudomonas phage PaMx11.